Reading from the N-terminus, the 468-residue chain is IQ domain-containing protein C (468 aa).

The IQ domain maps to 6 to 35 (LVLKVTALQACIRGFLVRRQFQSLRGEYEA). Disordered stretches follow at residues 113–157 (NASS…GPGL), 202–245 (EVNQ…PGEP), and 329–468 (SHKE…GPAG). Basic and acidic residues predominate over residues 139-150 (QETRDVSRKNDP). The segment covering 415 to 426 (SSIERSPSESSH) has biased composition (basic and acidic residues).

This chain is IQ domain-containing protein C (IQCC), found in Bos taurus (Bovine).